The chain runs to 446 residues: Acyl-lipid (8-3)-desaturase (446 aa).

One can recognise a Cytochrome b5 heme-binding domain in the interval 6–82 (GKTFTWEELA…MKKYYVGTLV (77 aa)). His41 and His64 together coordinate heme. 2 consecutive transmembrane segments (helical) span residues 125–145 (ALIFGSLIASYYAQLFVPFVV) and 150–170 (LQVVFAIIMGFACAQVGLNPL). The Histidine box-1 motif lies at 171–175 (HDASH). The Histidine box-2 signature appears at 207-212 (HMLGHH). The Histidine box-3 motif lies at 387–391 (QAVHH).

It belongs to the fatty acid desaturase type 1 family. Requires Fe(2+) as cofactor.

The protein localises to the membrane. The catalysed reaction is an (8Z,11Z,14Z)-icosatrienoyl-containing glycerolipid + 2 Fe(II)-[cytochrome b5] + O2 + 2 H(+) = (5Z,8Z,11Z,14Z)-eicosatetraenoyl-containing glycerolipid + 2 Fe(III)-[cytochrome b5] + 2 H2O. It catalyses the reaction an (8Z,11Z,14Z,17Z)-eicosatetraenoyl-containing glycerolipid + 2 Fe(II)-[cytochrome b5] + O2 + 2 H(+) = a (5Z,8Z,11Z,14Z,17Z)-eicosapentaenoyl-containing glycerolipid + 2 Fe(III)-[cytochrome b5] + 2 H2O. Fatty acid desaturase that introduces a cis double bond at the 5-position in 20-carbon polyunsaturated fatty acids incorporated in a glycerolipid that contain a Delta(8) double bond. Involved in the conversion of di-homo-Delta-linolenic acid to arachidonic acid. Essential in the production of eicosanoids. In Mortierella alpina (Oleaginous fungus), this protein is Acyl-lipid (8-3)-desaturase (DES1).